The sequence spans 133 residues: Small ribosomal subunit protein uS8 (133 aa).

This sequence belongs to the universal ribosomal protein uS8 family. In terms of assembly, part of the 30S ribosomal subunit. Contacts proteins S5 and S12.

Functionally, one of the primary rRNA binding proteins, it binds directly to 16S rRNA central domain where it helps coordinate assembly of the platform of the 30S subunit. In Synechococcus sp. (strain CC9605), this protein is Small ribosomal subunit protein uS8.